The primary structure comprises 355 residues: Probable nitronate monooxygenase (355 aa).

FMN contacts are provided by residues asparagine 71, glutamine 175, glycine 180, glycine 219, and glutamine 238–threonine 241.

Belongs to the nitronate monooxygenase family. NMO class I subfamily. The cofactor is FMN.

It carries out the reaction 3 propionate 3-nitronate + 3 O2 + H2O = 3 3-oxopropanoate + 2 nitrate + nitrite + H2O2 + 3 H(+). Its function is as follows. Nitronate monooxygenase that uses molecular oxygen to catalyze the oxidative denitrification of alkyl nitronates. Acts on propionate 3-nitronate (P3N), the presumed physiological substrate. Probably functions in the detoxification of P3N, a metabolic poison produced by plants and fungi as a defense mechanism. This chain is Probable nitronate monooxygenase, found in Staphylococcus saprophyticus subsp. saprophyticus (strain ATCC 15305 / DSM 20229 / NCIMB 8711 / NCTC 7292 / S-41).